Reading from the N-terminus, the 1236-residue chain is ESX-4 secretion system protein EccC4 (1236 aa).

The next 2 helical transmembrane spans lie at 32-52 (LLPV…FLPG) and 59-79 (PTFL…AVTG). 3 consecutive FtsK domains span residues 407-607 (GTAV…SESR), 747-936 (RVPL…ADSE), and 1018-1201 (GQPV…DEGA). ATP is bound by residues 430–437 (GATGSGKS), 765–772 (GAPQTGKS), and 1035–1042 (GDNECGKT).

In terms of assembly, part of the ESX-4 / type VII secretion system (T7SS), which is composed of cytosolic and membrane components.

It is found in the cell membrane. This is ESX-4 secretion system protein EccC4 (eccC4) from Mycobacterium tuberculosis (strain ATCC 25618 / H37Rv).